The primary structure comprises 387 residues: Ferrochelatase (387 aa).

Residues histidine 196 and glutamate 277 each coordinate Fe cation.

This sequence belongs to the ferrochelatase family.

It localises to the cytoplasm. The enzyme catalyses heme b + 2 H(+) = protoporphyrin IX + Fe(2+). The protein operates within porphyrin-containing compound metabolism; protoheme biosynthesis; protoheme from protoporphyrin-IX: step 1/1. Functionally, catalyzes the ferrous insertion into protoporphyrin IX. This Trichodesmium erythraeum (strain IMS101) protein is Ferrochelatase.